Reading from the N-terminus, the 497-residue chain is Cysteine--tRNA ligase (497 aa).

Cys32 is a binding site for Zn(2+). A 'HIGH' region motif is present at residues 34 to 44; the sequence is PTVYGEGHLGH. Zn(2+) is bound by residues Cys228, His253, and Glu257. The 'KMSKS' region motif lies at 285–289; sequence KMGKS. ATP is bound at residue Lys288.

The protein belongs to the class-I aminoacyl-tRNA synthetase family. Monomer. Zn(2+) is required as a cofactor.

It localises to the cytoplasm. The catalysed reaction is tRNA(Cys) + L-cysteine + ATP = L-cysteinyl-tRNA(Cys) + AMP + diphosphate. In Cytophaga hutchinsonii (strain ATCC 33406 / DSM 1761 / CIP 103989 / NBRC 15051 / NCIMB 9469 / D465), this protein is Cysteine--tRNA ligase.